A 357-amino-acid chain; its full sequence is Pre-mRNA-splicing factor RBM22 homolog (357 aa).

A C3H1-type zinc finger spans residues 153–180 (RNMARVCSFWRKNSCNRGDECPYLHKEI). An RRM domain is found at 222 to 295 (NKICIQGISE…CNLTVHLQDN (74 aa)).

Belongs to the SLT11 family. In terms of assembly, probable component of the spliceosome C complex.

Its subcellular location is the nucleus. In terms of biological role, involved in pre-mRNA splicing. Binds RNA. The sequence is that of Pre-mRNA-splicing factor RBM22 homolog from Plasmodium falciparum (isolate 3D7).